The following is a 279-amino-acid chain: Formamidopyrimidine-DNA glycosylase (279 aa).

P2 acts as the Schiff-base intermediate with DNA in catalysis. E3 serves as the catalytic Proton donor. The Proton donor; for beta-elimination activity role is filled by K57. DNA is bound by residues H90, R109, and R151. An FPG-type zinc finger spans residues 236–270; that stretch reads FVYGRTGQPCRVCQTPIAVLRLGQRSTFYCPACQQ. R260 serves as the catalytic Proton donor; for delta-elimination activity.

It belongs to the FPG family. In terms of assembly, monomer. Zn(2+) serves as cofactor.

The catalysed reaction is Hydrolysis of DNA containing ring-opened 7-methylguanine residues, releasing 2,6-diamino-4-hydroxy-5-(N-methyl)formamidopyrimidine.. It catalyses the reaction 2'-deoxyribonucleotide-(2'-deoxyribose 5'-phosphate)-2'-deoxyribonucleotide-DNA = a 3'-end 2'-deoxyribonucleotide-(2,3-dehydro-2,3-deoxyribose 5'-phosphate)-DNA + a 5'-end 5'-phospho-2'-deoxyribonucleoside-DNA + H(+). Involved in base excision repair of DNA damaged by oxidation or by mutagenic agents. Acts as a DNA glycosylase that recognizes and removes damaged bases. Has a preference for oxidized purines, such as 7,8-dihydro-8-oxoguanine (8-oxoG). Has AP (apurinic/apyrimidinic) lyase activity and introduces nicks in the DNA strand. Cleaves the DNA backbone by beta-delta elimination to generate a single-strand break at the site of the removed base with both 3'- and 5'-phosphates. In Methylobacillus flagellatus (strain ATCC 51484 / DSM 6875 / VKM B-1610 / KT), this protein is Formamidopyrimidine-DNA glycosylase.